A 478-amino-acid polypeptide reads, in one-letter code: Probable L-ascorbate peroxidase 8, chloroplastic (478 aa).

Low complexity predominate over residues 1-13 (MAERIAASLLPAA). 2 disordered regions span residues 1-31 (MAER…VSAA) and 44-66 (GGLR…RSGR). A chloroplast-targeting transit peptide spans 1–76 (MAERIAASLL…AGAGARAVVR (76 aa)). The segment covering 14-26 (SPSPAPSPPPPRP) has biased composition (pro residues). Residue His-117 is the Proton acceptor of the active site. Residues 245-276 (AHTLGRSRPDRSGWGKPETKYTKDGPGEPGGQ) are disordered. Heme b is bound at residue His-246. Thr-247 contributes to the K(+) binding site. A compositionally biased stretch (basic and acidic residues) spans 251–270 (SRPDRSGWGKPETKYTKDGP). Residues Thr-279 and Asp-286 each coordinate K(+). The interval 346-417 (AKFDPPEGFS…DNNGAAPQPE (72 aa)) is disordered. Pro residues predominate over residues 369–381 (PAPAPAAAPPPPP). Residues 394-406 (PVTVGAAVASSPA) are compositionally biased toward low complexity. Residues 458 to 478 (YFLNIMLLIGGLAFLTSLLGS) traverse the membrane as a helical segment.

Belongs to the peroxidase family. Ascorbate peroxidase subfamily. In terms of assembly, interacts with SWEET11/OS8N3. The cofactor is heme b. In terms of tissue distribution, expressed in roots, leaves, stems and flowers. Expressed in leaves, shoots and panicles. Expressed at low levels in roots.

The protein resides in the plastid. The protein localises to the chloroplast thylakoid membrane. It carries out the reaction L-ascorbate + H2O2 = L-dehydroascorbate + 2 H2O. Its function is as follows. Involved in defense response and tolerance to the bacterial pathogen Xanthomonas oryzae pv. oryzae (Xoo). Plays an important role in hydrogen peroxide removal during infection by Xoo. Involved in response to abiotic stress. Plays a role in hydrogen peroxide removal durings salt stress. This is Probable L-ascorbate peroxidase 8, chloroplastic from Oryza sativa subsp. japonica (Rice).